A 215-amino-acid polypeptide reads, in one-letter code: UPF0323 lipoprotein HP_0232 (215 aa).

Positions 1–27 are cleaved as a signal peptide; sequence MKKPYRKISDYAIVGGLSALVMVSIVG. Cys28 carries the N-palmitoyl cysteine lipid modification. Cys28 is lipidated: S-diacylglycerol cysteine. Over residues 158-169 the composition is skewed to polar residues; it reads QRTYKSPQAYQR. Residues 158–215 are disordered; sequence QRTYKSPQAYQRSQNSFSKSAPSASSMGGASKGQSGFFGSSRPTSSPAVSSGTRGFNS. Residues 170 to 208 show a composition bias toward low complexity; it reads SQNSFSKSAPSASSMGGASKGQSGFFGSSRPTSSPAVSS.

It belongs to the UPF0323 family.

It localises to the cell membrane. The protein is UPF0323 lipoprotein HP_0232 of Helicobacter pylori (strain ATCC 700392 / 26695) (Campylobacter pylori).